The chain runs to 79 residues: U-myrmeciitoxin(01)-Mg9a (79 aa).

Residues 1–21 form the signal peptide; it reads MKLSCLLLTLAIIFVLTIVHA. Positions 22-48 are excised as a propeptide; sequence PNVEAKALANPESDAIGFADAVGEADP. Gln78 bears the Glutamine amide mark.

Expressed by the venom gland.

It localises to the secreted. In terms of biological role, may have antimicrobial properties, like most ant linear peptides. The sequence is that of U-myrmeciitoxin(01)-Mg9a from Myrmecia gulosa (Red bulldog ant).